A 348-amino-acid polypeptide reads, in one-letter code: Protein RecA (348 aa).

ATP is bound at residue 67–74 (GPESSGKT).

It belongs to the RecA family.

It localises to the cytoplasm. Its function is as follows. Can catalyze the hydrolysis of ATP in the presence of single-stranded DNA, the ATP-dependent uptake of single-stranded DNA by duplex DNA, and the ATP-dependent hybridization of homologous single-stranded DNAs. It interacts with LexA causing its activation and leading to its autocatalytic cleavage. The protein is Protein RecA of Amycolatopsis mediterranei (strain U-32).